The sequence spans 61 residues: Metallothionein-2 (61 aa).

Residue Met1 is modified to N-acetylmethionine. The tract at residues 1 to 29 is beta; it reads MDPNCSCATDGSCSCAGSCKCKECKCTTC. 18 residues coordinate a divalent metal cation: Cys5, Cys7, Cys13, Cys15, Cys19, Cys21, Cys24, Cys26, Cys29, Cys33, Cys34, Cys36, Cys37, Cys41, Cys44, Cys48, Cys50, and Cys57. Positions 30-61 are alpha; sequence KKSCCSCCPVGCAKCSQGCVCKEASDKCSCCA. The residue at position 58 (Ser58) is a Phosphoserine. The a divalent metal cation site is built by Cys59 and Cys60.

Belongs to the metallothionein superfamily. Type 1 family.

Its function is as follows. Metallothioneins have a high content of cysteine residues that bind various heavy metals; these proteins are transcriptionally regulated by both heavy metals and glucocorticoids. In Cricetulus griseus (Chinese hamster), this protein is Metallothionein-2 (MT2).